Consider the following 375-residue polypeptide: 4-hydroxy-3-methylbut-2-en-1-yl diphosphate synthase (flavodoxin) (375 aa).

Positions 275, 278, 310, and 317 each coordinate [4Fe-4S] cluster.

This sequence belongs to the IspG family. [4Fe-4S] cluster is required as a cofactor.

It catalyses the reaction (2E)-4-hydroxy-3-methylbut-2-enyl diphosphate + oxidized [flavodoxin] + H2O + 2 H(+) = 2-C-methyl-D-erythritol 2,4-cyclic diphosphate + reduced [flavodoxin]. The protein operates within isoprenoid biosynthesis; isopentenyl diphosphate biosynthesis via DXP pathway; isopentenyl diphosphate from 1-deoxy-D-xylulose 5-phosphate: step 5/6. Functionally, converts 2C-methyl-D-erythritol 2,4-cyclodiphosphate (ME-2,4cPP) into 1-hydroxy-2-methyl-2-(E)-butenyl 4-diphosphate. In Ruegeria pomeroyi (strain ATCC 700808 / DSM 15171 / DSS-3) (Silicibacter pomeroyi), this protein is 4-hydroxy-3-methylbut-2-en-1-yl diphosphate synthase (flavodoxin).